A 421-amino-acid chain; its full sequence is 2',3'-cyclic-nucleotide 3'-phosphodiesterase (421 aa).

Residues S6 and S9 each carry the phosphoserine modification. Position 110 is a phosphotyrosine (Y110). S170 is subject to Phosphoserine. Residue H251 is the Proton acceptor of the active site. T253 is a substrate binding site. H330 acts as the Proton donor in catalysis. Residue T332 participates in substrate binding. S359 bears the Phosphoserine mark. C418 is subject to Cysteine methyl ester. A lipid anchor (S-farnesyl cysteine) is attached at C418. Residues 419–421 (TII) constitute a propeptide, removed in mature form.

The protein belongs to the 2H phosphoesterase superfamily. CNPase family. In terms of assembly, exists as monomers and homodimers.

It localises to the membrane. It is found in the melanosome. It catalyses the reaction a nucleoside 2',3'-cyclic phosphate + H2O = a nucleoside 2'-phosphate + H(+). In terms of biological role, catalyzes the formation of 2'-nucleotide products from 2',3'-cyclic substrates. May participate in RNA metabolism in the myelinating cell, CNP is the third most abundant protein in central nervous system myelin. The sequence is that of 2',3'-cyclic-nucleotide 3'-phosphodiesterase from Pongo abelii (Sumatran orangutan).